A 1321-amino-acid chain; its full sequence is Probable serine/threonine-protein kinase fnkE (1321 aa).

4 FNIP repeats span residues 108-149 (YNQL…NLSS), 150-191 (YNQP…DLSS), 192-233 (YNKL…DLSS), and 255-296 (YNKL…DISS). One can recognise a Protein kinase 1 domain in the interval 295-595 (SSYNQLLTPG…YNYVIKDSIM (301 aa)). Residues 301 to 309 (LTPGTLSNN) and Lys-325 contribute to the ATP site. Asp-465 acts as the Proton acceptor in catalysis. 2 FNIP repeats span residues 654 to 696 (FNHP…FNKF) and 741 to 783 (FNQP…LGSN). Positions 860–1128 (WEIISTLGSG…EGDSVFEKYL (269 aa)) constitute a Protein kinase 2 domain. Residues 866 to 874 (LGSGNFGKV) and Lys-895 each bind ATP. Residue Asp-990 is the Proton acceptor of the active site. FNIP repeat units lie at residues 1160–1202 (YNQM…LGNE) and 1224–1268 (FNFT…LGSN).

It belongs to the protein kinase superfamily. STE Ser/Thr protein kinase family. Mg(2+) is required as a cofactor.

It catalyses the reaction L-seryl-[protein] + ATP = O-phospho-L-seryl-[protein] + ADP + H(+). It carries out the reaction L-threonyl-[protein] + ATP = O-phospho-L-threonyl-[protein] + ADP + H(+). The polypeptide is Probable serine/threonine-protein kinase fnkE (Dictyostelium discoideum (Social amoeba)).